An 82-amino-acid polypeptide reads, in one-letter code: NAD(P)H-quinone oxidoreductase subunit O (82 aa).

Belongs to the complex I NdhO subunit family. As to quaternary structure, NDH-1 can be composed of about 15 different subunits; different subcomplexes with different compositions have been identified which probably have different functions.

It localises to the cellular thylakoid membrane. The enzyme catalyses a plastoquinone + NADH + (n+1) H(+)(in) = a plastoquinol + NAD(+) + n H(+)(out). The catalysed reaction is a plastoquinone + NADPH + (n+1) H(+)(in) = a plastoquinol + NADP(+) + n H(+)(out). In terms of biological role, NDH-1 shuttles electrons from an unknown electron donor, via FMN and iron-sulfur (Fe-S) centers, to quinones in the respiratory and/or the photosynthetic chain. The immediate electron acceptor for the enzyme in this species is believed to be plastoquinone. Couples the redox reaction to proton translocation, and thus conserves the redox energy in a proton gradient. Cyanobacterial NDH-1 also plays a role in inorganic carbon-concentration. In Prochlorococcus marinus (strain MIT 9211), this protein is NAD(P)H-quinone oxidoreductase subunit O.